The following is a 458-amino-acid chain: Exodeoxyribonuclease 7 large subunit (458 aa).

This sequence belongs to the XseA family. Heterooligomer composed of large and small subunits.

The protein localises to the cytoplasm. It carries out the reaction Exonucleolytic cleavage in either 5'- to 3'- or 3'- to 5'-direction to yield nucleoside 5'-phosphates.. In terms of biological role, bidirectionally degrades single-stranded DNA into large acid-insoluble oligonucleotides, which are then degraded further into small acid-soluble oligonucleotides. This Escherichia coli O6:H1 (strain CFT073 / ATCC 700928 / UPEC) protein is Exodeoxyribonuclease 7 large subunit.